A 248-amino-acid chain; its full sequence is Tyrosine recombinase XerD-like (248 aa).

Residues 1 to 72 (MKSYIEPFIA…TANQFLYYLY (72 aa)) form the Core-binding (CB) domain. The Tyr recombinase domain maps to 85–248 (DTMKVMRTEK…PVTLEKYYKS (164 aa)). Residues K149 and R213 contribute to the active site. Y245 serves as the catalytic O-(3'-phospho-DNA)-tyrosine intermediate.

Belongs to the 'phage' integrase family. XerD-like subfamily.

Its subcellular location is the cytoplasm. Its function is as follows. Putative tyrosine recombinase. Not involved in the cutting and rejoining of the recombining DNA molecules on dif(SL) site. This Streptococcus pyogenes serotype M6 (strain ATCC BAA-946 / MGAS10394) protein is Tyrosine recombinase XerD-like.